The primary structure comprises 305 residues: N-acetylmuramic acid 6-phosphate etherase (305 aa).

An SIS domain is found at 54–217 (AVPQLERGGR…SSALMVRLGK (164 aa)). The Proton donor role is filled by Glu82. Glu113 is a catalytic residue.

Belongs to the GCKR-like family. MurNAc-6-P etherase subfamily. As to quaternary structure, homodimer.

The enzyme catalyses N-acetyl-D-muramate 6-phosphate + H2O = N-acetyl-D-glucosamine 6-phosphate + (R)-lactate. It participates in amino-sugar metabolism; N-acetylmuramate degradation. Functionally, specifically catalyzes the cleavage of the D-lactyl ether substituent of MurNAc 6-phosphate, producing GlcNAc 6-phosphate and D-lactate. The polypeptide is N-acetylmuramic acid 6-phosphate etherase (Deinococcus radiodurans (strain ATCC 13939 / DSM 20539 / JCM 16871 / CCUG 27074 / LMG 4051 / NBRC 15346 / NCIMB 9279 / VKM B-1422 / R1)).